Here is a 237-residue protein sequence, read N- to C-terminus: 2,3-bisphosphoglycerate-dependent phosphoglycerate mutase (237 aa).

Substrate is bound by residues 8–15, 21–22, Arg-60, 87–90, Lys-98, 114–115, and 180–181; these read RHGQSAWN, TG, ERHY, RR, and GN. His-9 (tele-phosphohistidine intermediate) is an active-site residue. Glu-87 serves as the catalytic Proton donor/acceptor.

The protein belongs to the phosphoglycerate mutase family. BPG-dependent PGAM subfamily. As to quaternary structure, homodimer.

The catalysed reaction is (2R)-2-phosphoglycerate = (2R)-3-phosphoglycerate. It functions in the pathway carbohydrate degradation; glycolysis; pyruvate from D-glyceraldehyde 3-phosphate: step 3/5. Catalyzes the interconversion of 2-phosphoglycerate and 3-phosphoglycerate. The chain is 2,3-bisphosphoglycerate-dependent phosphoglycerate mutase from Hyphomonas neptunium (strain ATCC 15444).